Here is an 802-residue protein sequence, read N- to C-terminus: Acetyl-CoA decarbonylase/synthase complex subunit alpha 1 (802 aa).

Positions 68, 71, 76, and 86 each coordinate [4Fe-4S] cluster. Position 109 (histidine 109) interacts with CO. [Ni-4Fe-4S] cluster contacts are provided by histidine 243, cysteine 271, and cysteine 310. 2 4Fe-4S ferredoxin-type domains span residues 395–424 (DEAL…VDQG) and 435–464 (SKLA…INVI). Positions 405, 408, 411, 415, 444, 447, 450, and 454 each coordinate [4Fe-4S] cluster. 3 residues coordinate [Ni-4Fe-4S] cluster: cysteine 512, cysteine 541, and cysteine 576.

Belongs to the Ni-containing carbon monoxide dehydrogenase family. As to quaternary structure, heterotetramer of two alpha and two epsilon subunits. The ACDS complex is made up of alpha, epsilon, beta, gamma and delta subunits with a probable stoichiometry of (alpha(2)epsilon(2))(4)-beta(8)-(gamma(1)delta(1))(8). It depends on [4Fe-4S] cluster as a cofactor. Requires [Ni-4Fe-4S] cluster as cofactor.

The enzyme catalyses CO + 2 oxidized [2Fe-2S]-[ferredoxin] + H2O = 2 reduced [2Fe-2S]-[ferredoxin] + CO2 + 2 H(+). Its function is as follows. Part of the ACDS complex that catalyzes the reversible cleavage of acetyl-CoA, allowing autotrophic growth from CO(2). The alpha-epsilon subcomponent functions as a carbon monoxide dehydrogenase. In Archaeoglobus fulgidus (strain ATCC 49558 / DSM 4304 / JCM 9628 / NBRC 100126 / VC-16), this protein is Acetyl-CoA decarbonylase/synthase complex subunit alpha 1.